The primary structure comprises 80 residues: Protein UL148B (80 aa).

A helical transmembrane segment spans residues 10–30 (AICVGLVMGVTVIASCALLVF).

It localises to the host membrane. This chain is Protein UL148B (UL148B), found in Homo sapiens (Human).